Reading from the N-terminus, the 1414-residue chain is DNA-directed RNA polymerase subunit beta' (1414 aa).

Cys-70, Cys-72, Cys-85, and Cys-88 together coordinate Zn(2+). Mg(2+) is bound by residues Asp-461, Asp-463, and Asp-465. Zn(2+) is bound by residues Cys-820, Cys-894, Cys-901, and Cys-904.

Belongs to the RNA polymerase beta' chain family. As to quaternary structure, the RNAP catalytic core consists of 2 alpha, 1 beta, 1 beta' and 1 omega subunit. When a sigma factor is associated with the core the holoenzyme is formed, which can initiate transcription. Mg(2+) serves as cofactor. Requires Zn(2+) as cofactor.

The catalysed reaction is RNA(n) + a ribonucleoside 5'-triphosphate = RNA(n+1) + diphosphate. Functionally, DNA-dependent RNA polymerase catalyzes the transcription of DNA into RNA using the four ribonucleoside triphosphates as substrates. This Cupriavidus taiwanensis (strain DSM 17343 / BCRC 17206 / CCUG 44338 / CIP 107171 / LMG 19424 / R1) (Ralstonia taiwanensis (strain LMG 19424)) protein is DNA-directed RNA polymerase subunit beta'.